The primary structure comprises 302 residues: uncharacterized protein (302 aa).

The segment at 1-24 (MTEISELASSSQKPEKTKYNLPKP) is disordered.

This is an uncharacterized protein from Schizosaccharomyces pombe (strain 972 / ATCC 24843) (Fission yeast).